Here is a 232-residue protein sequence, read N- to C-terminus: Enolase-phosphatase E1 (232 aa).

The protein belongs to the HAD-like hydrolase superfamily. MasA/MtnC family. As to quaternary structure, monomer. Requires Mg(2+) as cofactor.

It catalyses the reaction 5-methylsulfanyl-2,3-dioxopentyl phosphate + H2O = 1,2-dihydroxy-5-(methylsulfanyl)pent-1-en-3-one + phosphate. It functions in the pathway amino-acid biosynthesis; L-methionine biosynthesis via salvage pathway; L-methionine from S-methyl-5-thio-alpha-D-ribose 1-phosphate: step 3/6. The protein operates within amino-acid biosynthesis; L-methionine biosynthesis via salvage pathway; L-methionine from S-methyl-5-thio-alpha-D-ribose 1-phosphate: step 4/6. Bifunctional enzyme that catalyzes the enolization of 2,3-diketo-5-methylthiopentyl-1-phosphate (DK-MTP-1-P) into the intermediate 2-hydroxy-3-keto-5-methylthiopentenyl-1-phosphate (HK-MTPenyl-1-P), which is then dephosphorylated to form the acireductone 1,2-dihydroxy-3-keto-5-methylthiopentene (DHK-MTPene). This Xanthomonas euvesicatoria pv. vesicatoria (strain 85-10) (Xanthomonas campestris pv. vesicatoria) protein is Enolase-phosphatase E1.